Consider the following 74-residue polypeptide: Omega-conotoxin-like protein 1 (74 aa).

An N-terminal signal peptide occupies residues 1-20 (MSKFILLVCILLLTTNIVSA). 3 disulfides stabilise this stretch: Cys-24–Cys-38, Cys-31–Cys-43, and Cys-37–Cys-50.

In terms of tissue distribution, highly expressed in brain. Is also found in hemolymph.

In terms of biological role, the impact of this protein on the neuronal activity of the honeybee brain is not known. It does not affect apparent movement or hatching of blowfly larvae. However, when injected into fish, it induces a strong reversible paralytic effect. In addition, the presence of this small peptide in the hemolymph of adult drones together with its induction after bacterial infection suggests that this peptide exhibits antibacterial activity. This peptide may act by inhibiting ion channels. The chain is Omega-conotoxin-like protein 1 from Apis mellifera (Honeybee).